We begin with the raw amino-acid sequence, 419 residues long: Capsule polysaccharide modification protein LipB (419 aa).

The protein localises to the cell inner membrane. Functionally, involved in the phospholipid modification of the capsular polysaccharide, a strong requirement for its translocation to the cell surface. The chain is Capsule polysaccharide modification protein LipB (lipB) from Neisseria meningitidis serogroup B (strain ATCC BAA-335 / MC58).